A 342-amino-acid chain; its full sequence is MPQEIVFCKGGGCTAKLGPDLLSHVLAKLPRGEKDSNLLIGYDSCDDAAVYKISDDTAVVQTLDFFPPMVDDPYTFGQIAAANALSDIYAMGGTVKTALNIVCFPEKMDLNILGKIMQGGADKVIEAGGTLAGGHSIADSDVKYGLSVMGTVHPEHIYSNNTGQPSDVLILTKKLGVGLVCNANRVGEAPLGAIEDAVSSMTTLNKAASEISHAFDIHACTDVTGFSFLGHLSEMLNDDITALIDSISIPVITGALRCADEFFLTAAAQRNRNHVGDKVCFAKNIPFSMEEVLFDPQTSGGLLFAVKASEADAFLHELKAAGLPAAKVGRFVKRRDVPIYVN.

The active site involves C13. ATP-binding positions include K16 and S44–D46. Position 47 (D47) interacts with Mg(2+). ATP is bound by residues D64, D87, and G134–S136. A Mg(2+)-binding site is contributed by D87. D222 provides a ligand contact to Mg(2+).

It belongs to the selenophosphate synthase 1 family. Class I subfamily. In terms of assembly, homodimer. Requires Mg(2+) as cofactor.

The catalysed reaction is hydrogenselenide + ATP + H2O = selenophosphate + AMP + phosphate + 2 H(+). Synthesizes selenophosphate from selenide and ATP. The polypeptide is Selenide, water dikinase (Agathobacter rectalis (strain ATCC 33656 / DSM 3377 / JCM 17463 / KCTC 5835 / VPI 0990) (Eubacterium rectale)).